We begin with the raw amino-acid sequence, 122 residues long: NADH-quinone oxidoreductase subunit A (122 aa).

3 helical membrane passes run 10–30 (MIVL…LTLG), 66–86 (IFAL…PWAV), and 91–111 (LGLF…VGLA).

Belongs to the complex I subunit 3 family. NDH-1 is composed of 14 different subunits. Subunits NuoA, H, J, K, L, M, N constitute the membrane sector of the complex.

Its subcellular location is the cell membrane. The catalysed reaction is a quinone + NADH + 5 H(+)(in) = a quinol + NAD(+) + 4 H(+)(out). Functionally, NDH-1 shuttles electrons from NADH, via FMN and iron-sulfur (Fe-S) centers, to quinones in the respiratory chain. The immediate electron acceptor for the enzyme in this species is believed to be a menaquinone. Couples the redox reaction to proton translocation (for every two electrons transferred, four hydrogen ions are translocated across the cytoplasmic membrane), and thus conserves the redox energy in a proton gradient. The polypeptide is NADH-quinone oxidoreductase subunit A (Bacillus mycoides (strain KBAB4) (Bacillus weihenstephanensis)).